The following is a 664-amino-acid chain: NADH-ubiquinone oxidoreductase chain 5 (664 aa).

The next 17 membrane-spanning stretches (helical) occupy residues 2–22 (LLLTLIFLPFLGSVAAGLFGF), 28–48 (GSVFITTLTTFLSCIFSLIII), 77–97 (FLFDSLTMIMLVVVTSISTLV), 120–140 (LFTFFMIILVTGDNFMQMFVG), 168–188 (AMLVNRISDLILLLGVLTIFY), 210–230 (FIFFNYILSIIDVACILIFIG), 250–270 (GPTPVSALIHAATMVTAGVYL), 285–305 (LKIITIIGASTAFFASTVGLV), 321–341 (LGYMFFACGLSNYPLAIFHLS), 342–362 (NHAYFKALLFLCSGAVIHAMG), 376–396 (ILPFTYIMFLIGSLSLMGFPF), 424–444 (LGTIGAFFTAFYSTRLLFFAF), 462–482 (PLEMGIPLGLLAFGSIFIGYI), 521–541 (LPVILSFCGLFGAFYLYFFKF), 590–610 (IDKGLIEMCGPYGLTTIFSFL), 614–634 (IILLQTGYIYHYSLLMLISTI), and 639–659 (IIFFSIIYYFNIITILLFLFI).

The protein belongs to the complex I subunit 5 family.

The protein resides in the mitochondrion inner membrane. The catalysed reaction is a ubiquinone + NADH + 5 H(+)(in) = a ubiquinol + NAD(+) + 4 H(+)(out). Functionally, core subunit of the mitochondrial membrane respiratory chain NADH dehydrogenase (Complex I) that is believed to belong to the minimal assembly required for catalysis. Complex I functions in the transfer of electrons from NADH to the respiratory chain. The immediate electron acceptor for the enzyme is believed to be ubiquinone. This Phytophthora infestans (Potato late blight agent) protein is NADH-ubiquinone oxidoreductase chain 5 (ND5).